The chain runs to 838 residues: Adenylate cyclase (838 aa).

The catalytic stretch occupies residues 1-541 (MNYDLFSAQK…DLRLSFPVTV (541 aa)). Residues 547-838 (EDLTHACEIR…VPFHSRLAMS (292 aa)) form a regulatory region.

It belongs to the adenylyl cyclase class-1 family.

It is found in the cytoplasm. It catalyses the reaction ATP = 3',5'-cyclic AMP + diphosphate. The protein is Adenylate cyclase (cya) of Pasteurella multocida (strain Pm70).